Here is a 572-residue protein sequence, read N- to C-terminus: Probable D-xylulose kinase A (572 aa).

The substrate site is built by His95, Arg166, Asp282, and Asn283. ATP-binding positions include Trp365, 470-471, and Asn474; that span reads GG.

The protein belongs to the FGGY kinase family.

The protein resides in the cytoplasm. The enzyme catalyses D-xylulose + ATP = D-xylulose 5-phosphate + ADP + H(+). In terms of biological role, highly specific D-xylulose kinase which participates in the catabolism of xylose. Xylose is a major component of hemicelluloses such as xylan. Most fungi utilize D-xylose via three enzymatic reactions, xylose reductase (XR), xylitol dehydrogenase (XDH), and xylulokinase, to form xylulose 5-phosphate, which enters pentose phosphate pathway. This Aspergillus flavus (strain ATCC 200026 / FGSC A1120 / IAM 13836 / NRRL 3357 / JCM 12722 / SRRC 167) protein is Probable D-xylulose kinase A (xkiA).